A 117-amino-acid polypeptide reads, in one-letter code: Hainantoxin-XV.2 (117 aa).

The N-terminal stretch at 1–20 is a signal peptide; the sequence is MKLCAVIIASLLVCAAVASS. The disordered stretch occupies residues 18–55; the sequence is ASSSDNQKEFAQEKEMTREETQSLGEHEKDDEVTGSEE. The propeptide occupies 21–56; it reads SDNQKEFAQEKEMTREETQSLGEHEKDDEVTGSEER. The segment covering 23 to 55 has biased composition (basic and acidic residues); sequence NQKEFAQEKEMTREETQSLGEHEKDDEVTGSEE. Intrachain disulfides connect Cys58/Cys72, Cys65/Cys78, Cys69/Cys115, and Cys71/Cys91.

It belongs to the neurotoxin 03 (Tx2) family. 02 subfamily. HNTX-XV sub-subfamily. Expressed by the venom gland.

It localises to the secreted. Functionally, putative ion channel inhibitor. This chain is Hainantoxin-XV.2, found in Cyriopagopus hainanus (Chinese bird spider).